A 159-amino-acid polypeptide reads, in one-letter code: MDMEKLKRMQARGGVRTGDGKGTPRRKVKNVHKSTGMDDKKLQTSLKKLNVQPIQAIEEVNMFKSDGNVIHFAAPKVHAAVPSNTFAIYGNGEDKELTELVPGILNQLGPDSLASLRKLAESYQSMQKAEGGEDKKDDDEDDDDIPDLVEGENFEDKVE.

Disordered stretches follow at residues 1–39 and 121–159; these read MDME…GMDD and ESYQ…DKVE. Over residues 23 to 32 the composition is skewed to basic residues; sequence TPRRKVKNVH. The NAC-A/B domain maps to 36–101; sequence GMDDKKLQTS…GEDKELTELV (66 aa). A compositionally biased stretch (acidic residues) spans 136-153; the sequence is KDDDEDDDDIPDLVEGEN.

The protein belongs to the NAC-beta family. In terms of assembly, part of the nascent polypeptide-associated complex (NAC), consisting of EGD2 and EGD1. NAC associates with ribosomes via EGD1.

It localises to the cytoplasm. It is found in the nucleus. Its function is as follows. Component of the nascent polypeptide-associated complex (NAC), a dynamic component of the ribosomal exit tunnel, protecting the emerging polypeptides from interaction with other cytoplasmic proteins to ensure appropriate nascent protein targeting. The NAC complex also promotes mitochondrial protein import by enhancing productive ribosome interactions with the outer mitochondrial membrane and blocks the inappropriate interaction of ribosomes translating non-secretory nascent polypeptides with translocation sites in the membrane of the endoplasmic reticulum. EGD1 may act as a transcription factor that exert a negative effect on the expression of several genes that are transcribed by RNA polymerase II. The polypeptide is Nascent polypeptide-associated complex subunit beta (egd1) (Botryotinia fuckeliana (strain B05.10) (Noble rot fungus)).